The chain runs to 306 residues: Ribonuclease Z (306 aa).

Positions 63, 65, 67, 68, 141, 208, and 266 each coordinate Zn(2+). The active-site Proton acceptor is the Asp-67.

This sequence belongs to the RNase Z family. Homodimer. The cofactor is Zn(2+).

It carries out the reaction Endonucleolytic cleavage of RNA, removing extra 3' nucleotides from tRNA precursor, generating 3' termini of tRNAs. A 3'-hydroxy group is left at the tRNA terminus and a 5'-phosphoryl group is left at the trailer molecule.. Functionally, zinc phosphodiesterase, which displays some tRNA 3'-processing endonuclease activity. Probably involved in tRNA maturation, by removing a 3'-trailer from precursor tRNA. This is Ribonuclease Z from Chlamydia abortus (strain DSM 27085 / S26/3) (Chlamydophila abortus).